A 142-amino-acid polypeptide reads, in one-letter code: Large ribosomal subunit protein uL13 (142 aa).

The protein belongs to the universal ribosomal protein uL13 family. As to quaternary structure, part of the 50S ribosomal subunit.

This protein is one of the early assembly proteins of the 50S ribosomal subunit, although it is not seen to bind rRNA by itself. It is important during the early stages of 50S assembly. This Maridesulfovibrio salexigens (strain ATCC 14822 / DSM 2638 / NCIMB 8403 / VKM B-1763) (Desulfovibrio salexigens) protein is Large ribosomal subunit protein uL13.